Consider the following 400-residue polypeptide: S-adenosylmethionine sensor upstream of mTORC1 (400 aa).

S-adenosyl-L-methionine is bound by residues arginine 99, glycine 168, aspartate 186, aspartate 198, phenylalanine 199, and serine 240.

The protein belongs to the BMT2/SAMTOR family. Interacts with the GATOR1 complex; interaction is disrupted when samtor binds S-adenosyl-L-methionine. Interacts with the KICSTOR complex; interaction is disrupted when samtor binds S-adenosyl-L-methionine.

In terms of biological role, S-adenosyl-L-methionine-binding protein that acts as an inhibitor of mTORC1 signaling via interaction with the GATOR1 and KICSTOR complexes. Acts as a sensor of S-adenosyl-L-methionine to signal methionine sufficiency to mTORC1: in presence of methionine, binds S-adenosyl-L-methionine, leading to disrupt interaction with the GATOR1 and KICSTOR complexes and promote mTORC1 signaling. Upon methionine starvation, S-adenosyl-L-methionine levels are reduced, thereby promoting the association with GATOR1 and KICSTOR, leading to inhibit mTORC1 signaling. Probably also acts as a S-adenosyl-L-methionine-dependent methyltransferase. The sequence is that of S-adenosylmethionine sensor upstream of mTORC1 from Xenopus laevis (African clawed frog).